A 111-amino-acid chain; its full sequence is UPF0342 protein gbs1446 (111 aa).

This sequence belongs to the UPF0342 family.

This chain is UPF0342 protein gbs1446, found in Streptococcus agalactiae serotype III (strain NEM316).